The chain runs to 287 residues: Proline iminopeptidase (287 aa).

Residues 22–271 form the AB hydrolase-1 domain; that stretch reads PLVLLHGGPG…RSRHMAFIDE (250 aa). The Nucleophile role is filled by Ser-98. Residue Asp-238 is part of the active site. His-265 functions as the Proton donor in the catalytic mechanism.

This sequence belongs to the peptidase S33 family.

The protein localises to the cell envelope. It carries out the reaction Release of N-terminal proline from a peptide.. Functionally, releases the N-terminal proline from various substrates. The chain is Proline iminopeptidase from Lactiplantibacillus plantarum (strain ATCC BAA-793 / NCIMB 8826 / WCFS1) (Lactobacillus plantarum).